The following is a 930-amino-acid chain: MSKKRLYEIAKELGKESKEVVARAKELGLDVKSHSSSVEEAVAAKIAASFKPAAAPKVEAKPAAPKVSAEKKTEKSEPAKPAVAKEEAKPAEPVAPKTEKVAAKPQSRNFKAEREARAKEQAERRKQNKGNNRDQQQNGNRQKNDGRNGGKQGQSNRDNRRFNDQAKKQQGQQKRRNERRQQEDKRSNQAAPRIDFKARAAALKAEQNAEYARSSEERFKQYQAAKEALAQANKRKEPEEIFEEAAKLAEQAQQVQAVVEVVPEKKEPAVDTRRKKQARPDKNRDDYDHEEDGPRKQQKNRSSQNQVRNQKNSNWNNNKKNKKGNNKNNRNQTPKPVTERKFHELPTEFEYTDGMTVAEIAKRIKREPAEIVKKLFMMGVMATQNQSLDGETIELLMVDYGIEAKQKVEVDNADIERFFVEDGYLNEDELVERPPVVTIMGHVDHGKTTLLDTLRNSRVATGEAGGITQHIGAYQIVENGKKITFLDTPGHAAFTSMRARGASVTDITILVVAADDGVMPQTIEAINHSKAANVPIIVAINKIDKPGANPERVIGELAEHGVMSTAWGGDSEFVEISAKFNQNIEELLETVLLVAEIQELKADPTVRAIGTVIEARLDKGKGAVATLLVQQGTLNVQDPIVVGNTFGRVRAMTNDLGRRVKVAGPSTPVSITGLNEAPMAGDHFAVYEDEKSARAAGEERAKRALMKQRQATQRVSLENLFDTLKAGELKSVNVIIKADVQGSVEALSASLQKIDVEGVKVTIVHSAVGAINESDVTLAEASNAFIVGFNVRPTPQARQQAEADDVEIRLHSIIYKVIEEMEEAMKGMLDPEFEEKVIGEAVIRETFKVSKVGTIGGFMVINGKVARDSKVRVIRDGVVIYDGELASLKHYKDDVKEVTNGREGGLMIDGYNDIKMDDVIEAYVMEEIKR.

Over residues 50-67 the composition is skewed to low complexity; sequence FKPAAAPKVEAKPAAPKV. Disordered regions lie at residues 50–195 and 260–346; these read FKPA…PRID and EVVP…HELP. Composition is skewed to basic and acidic residues over residues 68-90 and 110-125; these read SAEKKTEKSEPAKPAVAKEEAKP and FKAEREARAKEQAERR. Residues 129 to 141 are compositionally biased toward low complexity; that stretch reads KGNNRDQQQNGNR. Basic and acidic residues-rich tracts occupy residues 157 to 167 and 262 to 295; these read RDNRRFNDQAK and VPEKKEPAVDTRRKKQARPDKNRDDYDHEEDGPR. Residues 309-318 show a composition bias toward low complexity; sequence NQKNSNWNNN. The segment covering 337–346 has biased composition (basic and acidic residues); that stretch reads VTERKFHELP. The tr-type G domain occupies 432–599; that stretch reads ERPPVVTIMG…TVLLVAEIQE (168 aa). A G1 region spans residues 441–448; the sequence is GHVDHGKT. A GTP-binding site is contributed by 441-448; the sequence is GHVDHGKT. The interval 466-470 is G2; that stretch reads GITQH. Residues 487-490 form a G3 region; the sequence is DTPG. Residues 487–491 and 541–544 each bind GTP; these read DTPGH and NKID. The interval 541 to 544 is G4; that stretch reads NKID. The tract at residues 577–579 is G5; that stretch reads SAK.

It belongs to the TRAFAC class translation factor GTPase superfamily. Classic translation factor GTPase family. IF-2 subfamily.

The protein resides in the cytoplasm. Functionally, one of the essential components for the initiation of protein synthesis. Protects formylmethionyl-tRNA from spontaneous hydrolysis and promotes its binding to the 30S ribosomal subunits. Also involved in the hydrolysis of GTP during the formation of the 70S ribosomal complex. This Streptococcus pneumoniae (strain ATCC BAA-255 / R6) protein is Translation initiation factor IF-2.